The following is a 340-amino-acid chain: MNQRLSALVNGGFLSENEAHQLMHDMMSGSLTDAEVAASLSILAHRGETAEEMTGFVRAMRQKAEPAERSLDVVDTCGTGGDGLSTFNISTAAAIVASAAGAKIAKHGNRSVSSKSGSADVLECLGIHIQSTPEETRRQIQEKNMGFLFAPMYHSSMKQVAAVRKQLGFRTVFNLLGPLCHPMQAKKQIIGVYAKEKAKLMAEALAPLEPEHVLFVCGEDGLDELTITANSYVIELKKGDMTEYTLNPEDFGLAKGYLSDIQVQSPEESAKLIQNILNHQTEGAPLHITALNAGAALYVAGKSESLMAGTLKALETIKNGAAKEQLARLKQKTKEEEIYA.

5-phospho-alpha-D-ribose 1-diphosphate-binding positions include Gly-78, 81-82 (GD), Thr-86, 88-91 (NIST), 106-114 (KHGNRSVSS), and Ser-118. Gly-78 is a binding site for anthranilate. Residue Ser-90 coordinates Mg(2+). Residue Asn-109 coordinates anthranilate. Arg-164 contributes to the anthranilate binding site. Residues Asp-223 and Glu-224 each coordinate Mg(2+).

Belongs to the anthranilate phosphoribosyltransferase family. Homodimer. Mg(2+) serves as cofactor.

It carries out the reaction N-(5-phospho-beta-D-ribosyl)anthranilate + diphosphate = 5-phospho-alpha-D-ribose 1-diphosphate + anthranilate. The protein operates within amino-acid biosynthesis; L-tryptophan biosynthesis; L-tryptophan from chorismate: step 2/5. In terms of biological role, catalyzes the transfer of the phosphoribosyl group of 5-phosphorylribose-1-pyrophosphate (PRPP) to anthranilate to yield N-(5'-phosphoribosyl)-anthranilate (PRA). This Bacillus pumilus (strain SAFR-032) protein is Anthranilate phosphoribosyltransferase.